The following is a 174-amino-acid chain: Peptide methionine sulfoxide reductase MsrA (174 aa).

Cys10 is an active-site residue.

It belongs to the MsrA Met sulfoxide reductase family.

The catalysed reaction is L-methionyl-[protein] + [thioredoxin]-disulfide + H2O = L-methionyl-(S)-S-oxide-[protein] + [thioredoxin]-dithiol. The enzyme catalyses [thioredoxin]-disulfide + L-methionine + H2O = L-methionine (S)-S-oxide + [thioredoxin]-dithiol. Functionally, has an important function as a repair enzyme for proteins that have been inactivated by oxidation. Catalyzes the reversible oxidation-reduction of methionine sulfoxide in proteins to methionine. This is Peptide methionine sulfoxide reductase MsrA from Acinetobacter baumannii (strain SDF).